A 380-amino-acid polypeptide reads, in one-letter code: Homoserine O-succinyltransferase (380 aa).

Residues 49–357 form the AB hydrolase-1 domain; the sequence is NAILICHALS…ESTHGHDAFL (309 aa). The Nucleophile role is filled by Ser155. Arg225 is a binding site for substrate. Active-site residues include Asp320 and His353. Asp354 serves as a coordination point for substrate.

It belongs to the AB hydrolase superfamily. MetX family. Homodimer.

The protein localises to the cytoplasm. It carries out the reaction L-homoserine + succinyl-CoA = O-succinyl-L-homoserine + CoA. It participates in amino-acid biosynthesis; L-methionine biosynthesis via de novo pathway; O-succinyl-L-homoserine from L-homoserine: step 1/1. In terms of biological role, transfers a succinyl group from succinyl-CoA to L-homoserine, forming succinyl-L-homoserine. The protein is Homoserine O-succinyltransferase of Laribacter hongkongensis (strain HLHK9).